The following is an 86-amino-acid chain: Small ribosomal subunit protein bS20 (86 aa).

The protein belongs to the bacterial ribosomal protein bS20 family.

In terms of biological role, binds directly to 16S ribosomal RNA. The protein is Small ribosomal subunit protein bS20 of Bifidobacterium longum subsp. infantis (strain ATCC 15697 / DSM 20088 / JCM 1222 / NCTC 11817 / S12).